The following is a 279-amino-acid chain: MAEPMILDGNDVSKRIKDKLALQVAALEQKGVRPCLATILVGDDPASATYVRMKGNACKRLGIESKKIELPKETTTKELLAVIRELNNDSSVHGILLQHPVPSQIDERAAFDEIAIEKDVDGVTTLGFAQNAFGFAHYPSCTPAAILAILDHYQLPIEGKHAVVVGRSPILGKPVSQMLLNRNATVTICHSRTENVSDFVEKADIVVAAVGKPNFIQGEWIKSGAVVLDAGYNKGNIGDCEYDGCAQRASAITPVPGGVGPVTISMLLKHTVEAAERSV.

NADP(+) contacts are provided by residues 166 to 168 (GRS) and Ser191.

The protein belongs to the tetrahydrofolate dehydrogenase/cyclohydrolase family. As to quaternary structure, homodimer.

It carries out the reaction (6R)-5,10-methylene-5,6,7,8-tetrahydrofolate + NADP(+) = (6R)-5,10-methenyltetrahydrofolate + NADPH. The enzyme catalyses (6R)-5,10-methenyltetrahydrofolate + H2O = (6R)-10-formyltetrahydrofolate + H(+). It participates in one-carbon metabolism; tetrahydrofolate interconversion. Functionally, catalyzes the oxidation of 5,10-methylenetetrahydrofolate to 5,10-methenyltetrahydrofolate and then the hydrolysis of 5,10-methenyltetrahydrofolate to 10-formyltetrahydrofolate. The polypeptide is Bifunctional protein FolD (Shouchella clausii (strain KSM-K16) (Alkalihalobacillus clausii)).